The chain runs to 292 residues: G1/S-specific cyclin-D3 (292 aa).

Residues 27–152 (VLQSLLRLEE…LVLGKLKWDL (126 aa)) form the Cyclin N-terminal domain. The tract at residues 255 to 292 (LREAAQTSPSPAPKAPRGSSSQGPSQTSTPTDVTAIHL) is disordered. 2 positions are modified to phosphoserine: serine 264 and serine 279. The segment covering 272–285 (GSSSQGPSQTSTPT) has biased composition (low complexity). Phosphothreonine is present on threonine 283.

It belongs to the cyclin family. Cyclin D subfamily. In terms of assembly, interacts with the CDK4 and CDK6 protein kinases to form a serine/threonine kinase holoenzyme complex. The cyclin subunit imparts substrate specificity to the complex. Interacts with ATF5. Interacts with EIF3K. Component of the ternary complex cyclin D/CDK4/CDKN1B required for nuclear translocation and modulation of CDK4-mediated kinase activity. Can form similar complexes with either CDKN1A or CDKN2A. In terms of processing, phosphorylation at Thr-283 by MAP kinases is required for ubiquitination and degradation by the DCX(AMBRA1) complex. Ubiquitinated by the DCX(AMBRA1) complex during the transition from G1 to S cell phase, leading to its degradation: ubiquitination is dependent on Thr-283 phosphorylation. The DCX(AMBRA1) complex represents the major regulator of CCND3 stability during the G1/S transition. Polyubiquitinated by the SCF(FBXL2) complex, leading to proteasomal degradation.

It is found in the nucleus. The protein resides in the cytoplasm. Its function is as follows. Regulatory component of the cyclin D3-CDK4 (DC) complex that phosphorylates and inhibits members of the retinoblastoma (RB) protein family including RB1 and regulates the cell-cycle during G(1)/S transition. Phosphorylation of RB1 allows dissociation of the transcription factor E2F from the RB/E2F complex and the subsequent transcription of E2F target genes which are responsible for the progression through the G(1) phase. Hypophosphorylates RB1 in early G(1) phase. Cyclin D-CDK4 complexes are major integrators of various mitogenenic and antimitogenic signals. Component of the ternary complex, cyclin D3/CDK4/CDKN1B, required for nuclear translocation and activity of the cyclin D-CDK4 complex. Shows transcriptional coactivator activity with ATF5 independently of CDK4. This is G1/S-specific cyclin-D3 (CCND3) from Bos taurus (Bovine).